A 321-amino-acid chain; its full sequence is uncharacterized protein (321 aa).

Basic and acidic residues predominate over residues 1 to 12; it reads MQGGREVGRESV. Residues 1–85 form a disordered region; that stretch reads MQGGREVGRE…GWGEFEGFQE (85 aa). Residues 53–67 are compositionally biased toward polar residues; it reads NANSSRLDEGLSSSR.

This is an uncharacterized protein from Rattus norvegicus (Rat).